The following is a 973-amino-acid chain: NLR family member X1 (973 aa).

The N-terminal 84 residues, 1–84 (MRWGCHLPRT…EAIQRHRRNL (84 aa)), are a transit peptide targeting the mitochondrion. The interval 73-554 (ATEAIQRHRR…RILPLLFNLL (482 aa)) is required for interaction with MAVS. In terms of domain architecture, NACHT spans 158 to 481 (QTVVLYGTVG…LRFFLAPCVE (324 aa)). Position 164–171 (164–171 (GTVGTGKS)) interacts with ATP. The tract at residues 554–972 (LKVVPRVFGR…TLLEQLGGSG (419 aa)) is required for the repression of MAVS-induced interferon signaling. In terms of domain architecture, LRRNT spans 665–692 (RQVLPPSELLDHLFFHYEFQNQRFSAEV). LRR repeat units lie at residues 693 to 716 (LGSL…VVAS), 722 to 745 (RHPL…TLMP), 747 to 775 (LLRA…LLHD), 776 to 799 (QCQI…VLMD), 809 to 832 (HLSL…LDRN), 833 to 855 (KQLQ…ALAK), 856 to 875 (AARK…ELSS), and 876 to 897 (EGRQ…VVAS). One can recognise an LRRCT domain in the interval 904–968 (VSEYWSVILS…SEVKTLLEQL (65 aa)).

The protein belongs to the NLRP family. In terms of assembly, homohexamer. Interacts with MAVS. Interacts with TUFM.

It localises to the mitochondrion outer membrane. Participates in antiviral signaling. Acts as a negative regulator of MAVS-mediated antiviral responses, through the inhibition of the virus-induced RLH (RIG-like helicase)-MAVS interaction. Instead, promotes autophagy by interacting with TUFM and subsequently recruiting the autophagy-related proteins ATG5 and ATG12. Also regulates MAVS-dependent NLRP3 inflammasome activation to attenuate apoptosis. Has no inhibitory function on NF-kappa-B signaling pathway, but enhances NF-kappa-B and JUN N-terminal kinase dependent signaling through the production of reactive oxygen species. Regulates viral mediated-inflammation and energy metabolism in a sex-dependent manner. In females, prevents uncontrolled inflammation and energy metabolism and thus, may contribute to the sex differences observed in infectious and inflammatory diseases. In Rattus norvegicus (Rat), this protein is NLR family member X1 (Nlrx1).